The chain runs to 141 residues: Hemoglobin subunit alpha (141 aa).

Residues 1–141 (VLSSTDKSNV…VSTVLTSKYR (141 aa)) enclose the Globin domain. At Ser3 the chain carries Phosphoserine. Lys7 and Lys11 each carry N6-succinyllysine. At Lys16 the chain carries N6-acetyllysine; alternate. Lys16 is subject to N6-succinyllysine; alternate. At Tyr24 the chain carries Phosphotyrosine. The residue at position 35 (Ser35) is a Phosphoserine. Lys40 carries the N6-succinyllysine modification. His58 serves as a coordination point for O2. Residue His87 participates in heme b binding. Position 102 is a phosphoserine (Ser102). Thr108 bears the Phosphothreonine mark. Ser124 and Ser131 each carry phosphoserine. Thr134 and Thr137 each carry phosphothreonine. Ser138 carries the phosphoserine modification.

This sequence belongs to the globin family. As to quaternary structure, heterotetramer of two alpha chains and two beta chains. Red blood cells.

Involved in oxygen transport from the lung to the various peripheral tissues. Functionally, hemopressin acts as an antagonist peptide of the cannabinoid receptor CNR1. Hemopressin-binding efficiently blocks cannabinoid receptor CNR1 and subsequent signaling. This chain is Hemoglobin subunit alpha, found in Pteropus vampyrus (Large flying fox).